The following is a 451-amino-acid chain: MPREIITLQLGQCGNQIGFEFWKQLCAEHGISPEGIVEEFATEGTDRKDVFFYQADDEHYIPRAVLLDLEPRVIHSILNSPYAKLYNPENIYLSEHGGGAGNNWASGFSQGEKIHEDIFDIIDREADGSDSLEGFVLCHSIAGGTGSGLGSYLLERLNDRYPKKLVQTYSVFPNQDEMSDVVVQPYNSLLTLKRLTQNADCVVVLDNTTLNRIATNRLHIQNPSFFQINQLVSTIMSASTTTLRYPGYMNNDLIGLIASLIPTPRLHFLMTGYTPLTTDQSVASVRKTTVLDVMRRLLQPKNVMVSTGRDRQTNHCYIAILNIIQGEVDPTQVHKSLQRIRERKLANFIPWGPASIQVALSRKSPYLPSAHRVSGLMMANHTSISSLFERTCRQYDKLRKREAFLEQFRKEDIFKENFDELDTSREVVHQLIDEYHAATRPDYISWGAQEQ.

S131 is subject to Phosphoserine; by BRSK1. 142–148 is a GTP binding site; it reads AGGTGSG.

The protein belongs to the tubulin family. In terms of assembly, component of the gamma-tubulin ring complex (gTuRC) consisting of TUBGCP2, TUBGCP3, TUBGCP4, TUBGCP5 and TUBGCP6 and gamma-tubulin TUBG1 or TUBG2. TUBGCP2, TUBGCP3, TUBGCP4, TUBGCP5 and TUBGCP6 assemble in a 5:5:2:1:1 stoichiometry; each is associated with a gamma-tubulin, thereby arranging 14 gamma-tubulins in a helical manner. Gamma-tubulin at the first position is blocked by TUBGCP3 at the last position, allowing 13 protafilaments to grow into a microtubule. The gTuRC (via TUBGCP3 and TUBGCP6) interacts with ACTB and MZT1; the interactions form a luminal bridge that stabilizes the initial structure during complex assembly. The gTuRC (via TUBGCP2) interacts with MZT2A/MZT2B and CDK5RAP2 (via CM1 motif); the interactions play a role in gTuRC activation. Interacts with alpha-beta tubulin heterodimers; the interaction allows microtubules to nucleate from the gTuRC. Interacts with B9D2. Interacts with CDK5RAP2; the interaction is leading to centrosomal localization of TUBG1 and CDK5RAP2. Interacts with CIMAP3. Interacts with SAS6 and NUP62 at the centrosome. Interacts with EML3 (phosphorylated at 'Thr-881') and HAUS8. Interacts with DNM2; this interaction may participate in centrosome cohesion. Interacts with CCDC66. Phosphorylation at Ser-131 by BRSK1 regulates centrosome duplication, possibly by mediating relocation of gamma-tubulin and its associated proteins from the cytoplasm to the centrosome.

The protein resides in the cytoplasm. Its subcellular location is the cytoskeleton. The protein localises to the microtubule organizing center. It is found in the centrosome. It localises to the spindle. Functionally, tubulin is the major constituent of microtubules, protein filaments consisting of alpha- and beta-tubulin heterodimers. Gamma-tubulin is a key component of the gamma-tubulin ring complex (gTuRC) which mediates microtubule nucleation. The gTuRC regulates the minus-end nucleation of alpha-beta tubulin heterodimers that grow into microtubule protafilaments, a critical step in centrosome duplication and spindle formation. This chain is Tubulin gamma-1 chain, found in Canis lupus familiaris (Dog).